Consider the following 96-residue polypeptide: Phosphoribosyl-ATP pyrophosphatase (96 aa).

This sequence belongs to the PRA-PH family.

The protein localises to the cytoplasm. The catalysed reaction is 1-(5-phospho-beta-D-ribosyl)-ATP + H2O = 1-(5-phospho-beta-D-ribosyl)-5'-AMP + diphosphate + H(+). Its pathway is amino-acid biosynthesis; L-histidine biosynthesis; L-histidine from 5-phospho-alpha-D-ribose 1-diphosphate: step 2/9. The sequence is that of Phosphoribosyl-ATP pyrophosphatase from Methanococcus maripaludis (strain DSM 14266 / JCM 13030 / NBRC 101832 / S2 / LL).